We begin with the raw amino-acid sequence, 144 residues long: Transcriptional regulator MraZ (144 aa).

SpoVT-AbrB domains follow at residues 5–50 and 81–124; these read TFNH…ALPQ and AHEV…DRAA.

Belongs to the MraZ family. As to quaternary structure, forms oligomers.

It is found in the cytoplasm. Its subcellular location is the nucleoid. This is Transcriptional regulator MraZ from Anaeromyxobacter dehalogenans (strain 2CP-C).